The primary structure comprises 245 residues: tRNA pseudouridine synthase A 2 (245 aa).

Catalysis depends on Asp-53, which acts as the Nucleophile. Tyr-111 lines the substrate pocket.

Belongs to the tRNA pseudouridine synthase TruA family. As to quaternary structure, homodimer.

It catalyses the reaction uridine(38/39/40) in tRNA = pseudouridine(38/39/40) in tRNA. Formation of pseudouridine at positions 38, 39 and 40 in the anticodon stem and loop of transfer RNAs. The chain is tRNA pseudouridine synthase A 2 from Bacillus thuringiensis subsp. konkukian (strain 97-27).